Consider the following 456-residue polypeptide: tRNA modification GTPase MnmE (456 aa).

(6S)-5-formyl-5,6,7,8-tetrahydrofolate-binding residues include Arg-23, Glu-80, and Lys-122. The region spanning 218-380 (AKRIVIVGPP…LKKHLSNRQK (163 aa)) is the TrmE-type G domain. Asn-228 contributes to the K(+) binding site. Residues 228–233 (NAGKSS), 247–253 (TDLPGTT), and 272–275 (DTAG) each bind GTP. Ser-232 is a Mg(2+) binding site. Thr-247, Leu-249, and Thr-252 together coordinate K(+). Thr-253 is a Mg(2+) binding site. Lys-456 lines the (6S)-5-formyl-5,6,7,8-tetrahydrofolate pocket.

Belongs to the TRAFAC class TrmE-Era-EngA-EngB-Septin-like GTPase superfamily. TrmE GTPase family. In terms of assembly, homodimer. Heterotetramer of two MnmE and two MnmG subunits. Requires K(+) as cofactor.

It is found in the cytoplasm. Functionally, exhibits a very high intrinsic GTPase hydrolysis rate. Involved in the addition of a carboxymethylaminomethyl (cmnm) group at the wobble position (U34) of certain tRNAs, forming tRNA-cmnm(5)s(2)U34. This is tRNA modification GTPase MnmE from Buchnera aphidicola subsp. Schizaphis graminum (strain Sg).